The primary structure comprises 102 residues: UPF0473 protein SERP1179 (102 aa).

The protein belongs to the UPF0473 family.

The chain is UPF0473 protein SERP1179 from Staphylococcus epidermidis (strain ATCC 35984 / DSM 28319 / BCRC 17069 / CCUG 31568 / BM 3577 / RP62A).